The primary structure comprises 453 residues: MKLRVSQSPTPQMVITMLHGSSTYSLLASKKRNSNVVGQYIKNGIPFRMRNPADPSQPQVILPFKYLSEMKNAAESSWSFMHFSNQSFLLEYINAPLGSSIAHQVVRGELNKNLDWTALQPYMLFANTIARTTSLVLAGPELSANPEWTTIMVTFTMTLMQTSQEVRAKYSPWLRWLVPWIHPGAKNLYKIRKRCAQLLAPSYQNRRAGMVGDEKPFMDAIQWLMNKRTYKSKDLMKLSDDQLFLSVASIHSTSASTLSTLYDLLDRPECMDGILHEIRTIRAESKSSDWTKHDLDRLVKLDSFMKESQRYHPVGQVTVQRSNPRAYEFSDGLKIPANTQTCFLSYELNHDPDVYPDPETFDADRFLRMREKVDPQKYHFAYVSEDSINFGAGAHSCPGRHFAANEIKLMLCELLLGYEMKWPDGQSRPPTMFHDFSSNPNPGFDICIRERRL.

Residues 13–29 traverse the membrane as a helical segment; sequence MVITMLHGSSTYSLLAS. An N-linked (GlcNAc...) asparagine glycan is attached at asparagine 85. A heme-binding site is contributed by cysteine 397.

This sequence belongs to the cytochrome P450 family. The cofactor is heme.

The protein localises to the membrane. The protein operates within secondary metabolite biosynthesis. In terms of biological role, cytochrome P450 monooxygenase; part of the gene cluster that mediates the biosynthesis of a tyrosine-derived cytochalasan acting as a fungal signal recognized by resistant rice plants and leads to avirulence in Pi33 resistant rice cultivars. The first step in the pathway is catalyzed by the hybrid PKS-NRPS ACE1, assisted by the enoyl reductase RAP1, that are responsible for fusion of the tyrosine precursor and the polyketide backbone. The polyketide synthase module (PKS) of ACE1 is responsible for the synthesis of the polyketide backbone and the downstream nonribosomal peptide synthetase (NRPS) amidates the carboxyl end of the polyketide with the tyrosine precursor. Because ACE1 lacks a designated enoylreductase (ER) domain, the required activity is provided the enoyl reductase RAP1. Reduction by the hydrolyase ORFZ, followed by dehydration and intra-molecular Diels-Alder cyclization by the Diels-Alderase ORF3 then yield the required isoindolone-fused macrocycle. A number of oxidative steps catalyzed by the tailoring enzymes identified within the cluster, including cytochrome P450 monooxygenases CYP1 to CYP4, the FAD-linked oxidoreductase OXR2 and the short-chain dehydrogenase/reductase OXR1, are further required to afford the final cytochalasans that confer avirulence and which have still to be identified. The monooxygenase CYP1 has been shown to be a site-selective C-18 hydroxylase whereas the function of CYP3 is the site-selective epoxidation of the C-6/C-7 olefin that is present in some intermediate compounds. Finally, SYN2 and RAP2 are not required for avirulence in Pi33 resistant rice cultivars. This Pyricularia oryzae (strain 70-15 / ATCC MYA-4617 / FGSC 8958) (Rice blast fungus) protein is Cytochrome P450 monooxygenase CYP2.